A 569-amino-acid chain; its full sequence is Acyl-CoA transferase FVEG_12629 (569 aa).

Belongs to the CoA-transferase III family.

Its function is as follows. Acyl-CoA transferase; part of the Fusarium detoxification of benzoxazolinone cluster 2 (FDB2) involved in the degradation of benzoxazolinones produced by the host plant. Maize, wheat, and rye produce the 2 benzoxazinone phytoanticipins 2,4-dihy-droxy-7-methoxy-1,4-benzoxazin-3-one (DIMBOA) and 2,4-dihydroxy-1,4-benzoxazin-3-one (DIBOA) that, due to their inherent instability once released, spontaneously degrade to the more stable corresponding benzoxazolinones, 6-methoxy-2-benzoxazolinone (MBOA) and 2-benzoxazolinone (BOA), respectively. The first step in the detoxification of benzoxazolinones involves the hydrolysis of the cyclic ester bond of benzoxazolinones by the FDB1 cluster gamma-lactamase MBL1 to aminophenols. MBL1 is able to convert BOA into 2-aminophenol (2-AP), as well as MBOA into 5-methoxy-2-aminophenol (2-AMP). The FDB2 cluster N-malonyltransferase FDB2/NAT1 then metabolizes aminophenols via N-malonylation to non-toxic malonamic acids. FDB2/NAT1 converts 2-AP into N-(2-hydroxyphenyl) malonamic acid (HPMA) and 2-AMP into N-(2-hydroxy-4-methoxyphenyl) malonamic acid (HMPMA). The duplicated dienlactone hydrolases DLH1 and DLH2 may provide redundant function for hydrolyzing the lactone moiety in the BOA molecule. The roles of the amidases an other enzymes encoded by the 2 FDB clusters have not been identified so far. The protein is Acyl-CoA transferase FVEG_12629 of Gibberella moniliformis (strain M3125 / FGSC 7600) (Maize ear and stalk rot fungus).